The chain runs to 490 residues: Aspartyl/glutamyl-tRNA(Asn/Gln) amidotransferase subunit B (490 aa).

Belongs to the GatB/GatE family. GatB subfamily. In terms of assembly, heterotrimer of A, B and C subunits.

The enzyme catalyses L-glutamyl-tRNA(Gln) + L-glutamine + ATP + H2O = L-glutaminyl-tRNA(Gln) + L-glutamate + ADP + phosphate + H(+). It catalyses the reaction L-aspartyl-tRNA(Asn) + L-glutamine + ATP + H2O = L-asparaginyl-tRNA(Asn) + L-glutamate + ADP + phosphate + 2 H(+). Functionally, allows the formation of correctly charged Asn-tRNA(Asn) or Gln-tRNA(Gln) through the transamidation of misacylated Asp-tRNA(Asn) or Glu-tRNA(Gln) in organisms which lack either or both of asparaginyl-tRNA or glutaminyl-tRNA synthetases. The reaction takes place in the presence of glutamine and ATP through an activated phospho-Asp-tRNA(Asn) or phospho-Glu-tRNA(Gln). The polypeptide is Aspartyl/glutamyl-tRNA(Asn/Gln) amidotransferase subunit B (Methylobacterium sp. (strain 4-46)).